We begin with the raw amino-acid sequence, 412 residues long: Argininosuccinate synthase (412 aa).

ATP is bound by residues 16–24 (AYSGGLDTS) and alanine 44. Residues tyrosine 96 and serine 101 each contribute to the L-citrulline site. Glycine 126 is an ATP binding site. Threonine 128, asparagine 132, and aspartate 133 together coordinate L-aspartate. Asparagine 132 serves as a coordination point for L-citrulline. 5 residues coordinate L-citrulline: arginine 136, serine 185, serine 194, glutamate 270, and tyrosine 282.

The protein belongs to the argininosuccinate synthase family. Type 1 subfamily. As to quaternary structure, homotetramer.

It localises to the cytoplasm. It catalyses the reaction L-citrulline + L-aspartate + ATP = 2-(N(omega)-L-arginino)succinate + AMP + diphosphate + H(+). The protein operates within amino-acid biosynthesis; L-arginine biosynthesis; L-arginine from L-ornithine and carbamoyl phosphate: step 2/3. The sequence is that of Argininosuccinate synthase from Shewanella baltica (strain OS195).